The following is a 488-amino-acid chain: MSIRHCVAVDLGASSGRVMLASYQPGPRALTLREIHRFTNSLQKVDGFDCWDVDSLEGEIRRGLEKVCEQGILIDSIGIDTWGVDYVLLDKQGQRVGLPISYRDDRTQGLLRHAEAQLGRAEIYRRSGIQFLPFNTLYQLRALVEQQPELVSQAAHALLIPDYFSFRLTGNLNWEYTNATTTQLVNINSDSWDETLLNWTGAPLAWFGKPTHPGNVIGHWICPQGNRIPVVAVASHDTASAVIASPLADRHAAYLSSGTWSLMGFESLTPYTCDAALQANITNEGGAEGRYRVLKNIMGLWLLQRVLKEQNVSDLQGLIARTAALPACRFIIDCNDDRFINPASMSAEIQAACRDAGQPVPESDAELARCIFDSLALLYARVLNELAALRGHPFSQLHIVGGGCQNTLLNQLCADACGIVVVAGPIEASTLGNIGIQLMTLDELANVDEFRQVVRGNAALTTFTPNPDSEIARFVAQFQPQQTKELCA.

13–17 provides a ligand contact to ATP; it reads ASSGR. Cys-68 and Cys-222 form a disulfide bridge. Substrate contacts are provided by residues Gly-83 and 236–238; that span reads HDT. The active-site Proton acceptor is Asp-237. Thr-259 is an ATP binding site. Asn-296 lines the substrate pocket. Gln-304 lines the ATP pocket. Cys-353 and Cys-370 are oxidised to a cystine. ATP is bound at residue Gly-402. Cys-413 and Cys-417 are oxidised to a cystine.

This sequence belongs to the rhamnulokinase family. It depends on Mg(2+) as a cofactor.

The catalysed reaction is L-rhamnulose + ATP = L-rhamnulose 1-phosphate + ADP + H(+). It functions in the pathway carbohydrate degradation; L-rhamnose degradation; glycerone phosphate from L-rhamnose: step 2/3. Involved in the catabolism of L-rhamnose (6-deoxy-L-mannose). Catalyzes the transfer of the gamma-phosphate group from ATP to the 1-hydroxyl group of L-rhamnulose to yield L-rhamnulose 1-phosphate. The polypeptide is Rhamnulokinase (Klebsiella pneumoniae subsp. pneumoniae (strain ATCC 700721 / MGH 78578)).